A 439-amino-acid polypeptide reads, in one-letter code: Xylose isomerase (439 aa).

Residues His-101 and Asp-104 contribute to the active site. Positions 232, 268, 271, 296, 307, 309, and 339 each coordinate Mg(2+).

This sequence belongs to the xylose isomerase family. Homotetramer. Mg(2+) is required as a cofactor.

The protein localises to the cytoplasm. The enzyme catalyses alpha-D-xylose = alpha-D-xylulofuranose. The sequence is that of Xylose isomerase from Histophilus somni (strain 2336) (Haemophilus somnus).